Consider the following 248-residue polypeptide: Killer cell lectin-like receptor subfamily I member 2 (248 aa).

At 1 to 79 (MHKKKHIKHG…GIDPWLTTWQ (79 aa)) the chain is on the cytoplasmic side. A disordered region spans residues 19 to 44 (IGTKSPTFQEKQRPSKTDQRSTVWRE). A compositionally biased stretch (basic and acidic residues) spans 28–44 (EKQRPSKTDQRSTVWRE). Residues 80–100 (MITVILATLCIILVTKVGFLI) traverse the membrane as a helical; Signal-anchor for type II membrane protein segment. The Extracellular portion of the chain corresponds to 101 to 248 (PSLFSKGEKQ…KKTYICEFNI (148 aa)). Disulfide bonds link Cys132–Cys145, Cys161–Cys244, and Cys223–Cys236. A C-type lectin domain is found at 139-245 (FGNNFYCVFR…CSAKKTYICE (107 aa)). 3 N-linked (GlcNAc...) asparagine glycosylation sites follow: Asn197, Asn214, and Asn220.

Heterodimer with KLRE1. As to expression, expressed in natural killer (NK) cells.

The protein resides in the cell membrane. Lectin-like receptor for natural killer (NK) cells. Heterodimer formation with KLRE1 mediates NK cell cytolytic activity. In Mus musculus (Mouse), this protein is Killer cell lectin-like receptor subfamily I member 2.